An 815-amino-acid chain; its full sequence is uncharacterized protein (815 aa).

A DNA-binding region (zn(2)-C6 fungal-type) is located at residues 31–57 (CDMCRRKKIKCDGLRPCKNCKAGKLEC). A helical transmembrane segment spans residues 560 to 580 (YWTTVYCGFSTIVTLIFAALL). Disordered stretches follow at residues 646–668 (ESNV…SNTQ) and 769–792 (DPDV…FNPT). A compositionally biased stretch (polar residues) spans 780–792 (SSSLNNSTPFNPT).

Its subcellular location is the cytoplasm. It is found in the nucleus membrane. This is an uncharacterized protein from Schizosaccharomyces pombe (strain 972 / ATCC 24843) (Fission yeast).